The sequence spans 377 residues: Naringenin,2-oxoglutarate 3-dioxygenase (377 aa).

A Fe2OG dioxygenase domain is found at Cys-193–Pro-297. Fe cation is bound by residues His-220, Asp-222, and His-278. Arg-288 serves as a coordination point for 2-oxoglutarate.

This sequence belongs to the iron/ascorbate-dependent oxidoreductase family. It depends on Fe(2+) as a cofactor. L-ascorbate is required as a cofactor.

It carries out the reaction a (2S)-flavan-4-one + 2-oxoglutarate + O2 = a (2R,3R)-dihydroflavonol + succinate + CO2. It participates in secondary metabolite biosynthesis; flavonoid biosynthesis. Catalyzes the 3-beta-hydroxylation of 2S-flavanones to 2R,3R-dihydroflavonols which are intermediates in the biosynthesis of flavonols, anthocyanidins, catechins and proanthocyanidins in plants. The chain is Naringenin,2-oxoglutarate 3-dioxygenase from Hordeum vulgare (Barley).